The primary structure comprises 445 residues: Phosphoglucosamine mutase (445 aa).

S99 (phosphoserine intermediate) is an active-site residue. Mg(2+) is bound by residues S99, D242, D244, and D246. S99 carries the phosphoserine modification.

This sequence belongs to the phosphohexose mutase family. Mg(2+) serves as cofactor. In terms of processing, activated by phosphorylation.

It catalyses the reaction alpha-D-glucosamine 1-phosphate = D-glucosamine 6-phosphate. Catalyzes the conversion of glucosamine-6-phosphate to glucosamine-1-phosphate. The protein is Phosphoglucosamine mutase of Campylobacter jejuni (strain RM1221).